The primary structure comprises 353 residues: Hydrazine synthase subunit gamma (353 aa).

An N-terminal signal peptide occupies residues 1-39; that stretch reads MAREMRLGGKERMKTGVVKIGLVAALGVVGLISAGGVYA. The heme c site is built by Cys-102, Cys-105, and His-106. Positions 118, 119, 122, 123, 126, 129, 139, and 141 each coordinate Ca(2+). Heme c is bound by residues Cys-165, Cys-225, Cys-228, and His-229. In terms of domain architecture, Cytochrome c spans 209–353; sequence EAQKRGQKIF…QDLVEYLKAL (145 aa). Ca(2+)-binding residues include Asp-296, Ser-306, Gly-307, and Thr-308. A heme c-binding site is contributed by His-332.

Part of the hydrazine synthase complex that forms an elongated dimer of heterotrimers composed of one alpha, one beta and one gamma subunit. The cofactor is heme c.

The protein localises to the anammoxosome. It carries out the reaction hydrazine + 3 Fe(III)-[cytochrome c] + H2O = nitric oxide + 3 Fe(II)-[cytochrome c] + NH4(+) + 2 H(+). It functions in the pathway nitrogen metabolism. Functionally, component of the hydrazine synthase complex that catalyzes the condensation of nitric oxide (NO) with ammonium to form hydrazine. The gamma subunit catalyzes the first half-reaction, i.e. the three-electron reduction of nitric oxide to hydroxylamine; it may obtain electrons from the triheme cytochrome c kuste2854. Is involved in anaerobic ammonium oxidation (anammox), a biological process in which nitrite is used as the electron acceptor in the conversion of ammonium to dinitrogen gas (N2) and water; this bacterial process has a major role in the Earth's nitrogen cycle and has been estimated to synthesize up to 50% of the dinitrogen gas emitted into our atmosphere from the oceans. This is Hydrazine synthase subunit gamma from Kuenenia stuttgartiensis.